The chain runs to 213 residues: Peptidoglycan-N-acetylglucosamine deacetylase BC_3618 (213 aa).

In terms of domain architecture, NodB homology spans 22 to 203 (KIIAITFDDG…ELKKQGYRFV (182 aa)). Aspartate 29 acts as the Proton acceptor in catalysis. Zn(2+) is bound by residues aspartate 30, histidine 80, and histidine 84. Histidine 175 (proton donor) is an active-site residue.

The protein belongs to the polysaccharide deacetylase family. Requires Zn(2+) as cofactor.

The enzyme catalyses peptidoglycan-N-acetyl-D-glucosamine + H2O = peptidoglycan-D-glucosamine + acetate.. Its activity is regulated as follows. Inhibited by CuCl(2) and ZnCl(2). Catalyzes the deacetylation of N-acetylglucosamine (GlcNAc) residues in peptidoglycan. Also acts on soluble chitin substrates and N-acetylchitooligomers. Acts on cell wall peptidoglycan from the Gram-positive bacteria B.cereus and B.subtilis and the Gram-negative bacterium H.pylori. Not active on acetylated xylan. The sequence is that of Peptidoglycan-N-acetylglucosamine deacetylase BC_3618 from Bacillus cereus (strain ATCC 14579 / DSM 31 / CCUG 7414 / JCM 2152 / NBRC 15305 / NCIMB 9373 / NCTC 2599 / NRRL B-3711).